A 391-amino-acid chain; its full sequence is Histamine H4 receptor (391 aa).

The Extracellular portion of the chain corresponds to Met-1–Ala-19. N-linked (GlcNAc...) asparagine glycosylation occurs at Asn-5. The helical transmembrane segment at Phe-20–Phe-40 threads the bilayer. Over Val-41–Tyr-52 the chain is Cytoplasmic. Residues Phe-53–Ile-73 traverse the membrane as a helical segment. The Extracellular segment spans residues Pro-74–Cys-87. Cysteines 87 and 166 form a disulfide. A helical membrane pass occupies residues Met-88–Ile-108. Residues Ser-109–Lys-131 lie on the Cytoplasmic side of the membrane. A helical membrane pass occupies residues Ile-132 to Leu-152. Over Ala-153–Trp-174 the chain is Extracellular. Asn-159 carries N-linked (GlcNAc...) asparagine glycosylation. The chain crosses the membrane as a helical span at residues Tyr-175–Phe-195. Topologically, residues Ser-196–Ser-306 are cytoplasmic. Residues Leu-307–Val-327 form a helical membrane-spanning segment. At Leu-328–Ser-343 the chain is on the extracellular side. Residues Ile-344 to His-364 form a helical membrane-spanning segment. Topologically, residues Arg-365–Ser-391 are cytoplasmic.

Belongs to the G-protein coupled receptor 1 family. In terms of assembly, interacts with TSPAN4.

It is found in the cell membrane. The H4 subclass of histamine receptors could mediate the histamine signals in peripheral tissues. Displays a significant level of constitutive activity (spontaneous activity in the absence of agonist). In Rattus norvegicus (Rat), this protein is Histamine H4 receptor (Hrh4).